A 141-amino-acid chain; its full sequence is Hemoglobin subunit alpha-D (141 aa).

The Globin domain occupies 1–141 (MLTAEDKKLI…VAAVLAEKYR (141 aa)). Heme b is bound by residues His-58 and His-87.

In terms of assembly, heterotetramer of two alpha-D chains and two beta chains. Red blood cells.

Functionally, involved in oxygen transport from the lung to the various peripheral tissues. In Aythya fuligula (Tufted duck), this protein is Hemoglobin subunit alpha-D (HBAD).